We begin with the raw amino-acid sequence, 252 residues long: Phosphate import ATP-binding protein PstB 1 (252 aa).

The region spanning 6 to 247 is the ABC transporter domain; sequence LQVSDLSVYY…PQHKETEDYI (242 aa). 38–45 lines the ATP pocket; the sequence is GPSGSGKS.

This sequence belongs to the ABC transporter superfamily. Phosphate importer (TC 3.A.1.7) family. In terms of assembly, the complex is composed of two ATP-binding proteins (PstB), two transmembrane proteins (PstC and PstA) and a solute-binding protein (PstS).

The protein resides in the cell membrane. The enzyme catalyses phosphate(out) + ATP + H2O = ADP + 2 phosphate(in) + H(+). Its function is as follows. Part of the ABC transporter complex PstSACB involved in phosphate import. Responsible for energy coupling to the transport system. This chain is Phosphate import ATP-binding protein PstB 1, found in Streptococcus pneumoniae (strain ATCC BAA-255 / R6).